The chain runs to 373 residues: DNA replication and repair protein RecF (373 aa).

Residue 30–37 participates in ATP binding; sequence GDNAQGKT.

Belongs to the RecF family.

Its subcellular location is the cytoplasm. Functionally, the RecF protein is involved in DNA metabolism; it is required for DNA replication and normal SOS inducibility. RecF binds preferentially to single-stranded, linear DNA. It also seems to bind ATP. In Oenococcus oeni (strain ATCC BAA-331 / PSU-1), this protein is DNA replication and repair protein RecF.